The following is a 159-amino-acid chain: Ornithine decarboxylase antizyme (159 aa).

This sequence belongs to the ODC antizyme family. As to quaternary structure, interacts with ODC1 and thereby sterically blocks ODC homodimerization.

In terms of biological role, ornithine decarboxylase (ODC) antizyme protein that negatively regulates ODC activity and intracellular polyamine biosynthesis and uptake in response to increased intracellular polyamine levels. Binds to ODC monomers, inhibiting the assembly of the functional ODC homodimer, and targets the monomers for ubiquitin-independent proteolytic destruction by the 26S proteasome. This chain is Ornithine decarboxylase antizyme, found in Caenorhabditis elegans.